A 142-amino-acid polypeptide reads, in one-letter code: Large ribosomal subunit protein uL13 (142 aa).

Belongs to the universal ribosomal protein uL13 family. As to quaternary structure, part of the 50S ribosomal subunit.

In terms of biological role, this protein is one of the early assembly proteins of the 50S ribosomal subunit, although it is not seen to bind rRNA by itself. It is important during the early stages of 50S assembly. This chain is Large ribosomal subunit protein uL13, found in Pectobacterium atrosepticum (strain SCRI 1043 / ATCC BAA-672) (Erwinia carotovora subsp. atroseptica).